The primary structure comprises 834 residues: DNA polymerase I, thermostable (834 aa).

The 5'-3' exonuclease domain maps to 176–262 (KPEQWVDFRA…DLPLEVDLAQ (87 aa)). Residues 412-834 (ERLHRNLLKR…MGEDWLSAKG (423 aa)) form a polymerase region.

This sequence belongs to the DNA polymerase type-A family.

It catalyses the reaction DNA(n) + a 2'-deoxyribonucleoside 5'-triphosphate = DNA(n+1) + diphosphate. Its function is as follows. Has 5'-3' exonuclease activity and no 3'-5' exonuclease activity. The polypeptide is DNA polymerase I, thermostable (polA) (Thermus caldophilus).